A 163-amino-acid chain; its full sequence is Protein-export protein SecB (163 aa).

The protein belongs to the SecB family. In terms of assembly, homotetramer, a dimer of dimers. One homotetramer interacts with 1 SecA dimer.

The protein localises to the cytoplasm. Functionally, one of the proteins required for the normal export of preproteins out of the cell cytoplasm. It is a molecular chaperone that binds to a subset of precursor proteins, maintaining them in a translocation-competent state. It also specifically binds to its receptor SecA. This chain is Protein-export protein SecB, found in Brucella anthropi (strain ATCC 49188 / DSM 6882 / CCUG 24695 / JCM 21032 / LMG 3331 / NBRC 15819 / NCTC 12168 / Alc 37) (Ochrobactrum anthropi).